Here is a 379-residue protein sequence, read N- to C-terminus: Galactose-1-phosphate uridylyltransferase (379 aa).

Positions 1–10 are enriched in basic and acidic residues; sequence MSHSGADPEQ. The segment at 1-20 is disordered; the sequence is MSHSGADPEQRQQASEADAM. A Zn(2+)-binding site is contributed by Cys-75. UDP-alpha-D-glucose is bound by residues Ala-81, 97-98, and Asn-173; that span reads ND. His-184 is a Zn(2+) binding site. The active-site Tele-UMP-histidine intermediate is the His-186. Residue Gln-188 participates in UDP-alpha-D-glucose binding. The Zn(2+) site is built by Glu-202, His-301, His-319, and His-321. Residues 334 to 337 and 339 to 340 contribute to the UDP-alpha-D-glucose site; these read KFMV and YE.

The protein belongs to the galactose-1-phosphate uridylyltransferase type 1 family. As to quaternary structure, homodimer. It depends on Zn(2+) as a cofactor.

It carries out the reaction alpha-D-galactose 1-phosphate + UDP-alpha-D-glucose = alpha-D-glucose 1-phosphate + UDP-alpha-D-galactose. The protein operates within carbohydrate metabolism; galactose metabolism. In terms of biological role, plays an important role in galactose metabolism. The polypeptide is Galactose-1-phosphate uridylyltransferase (Galt) (Mus musculus (Mouse)).